The sequence spans 196 residues: Anthranilate synthase component 2 (196 aa).

The region spanning 1-195 (MLLLIDNYDS…LNTTRRLETA (195 aa)) is the Glutamine amidotransferase type-1 domain. 52–54 (GPC) is a binding site for L-glutamine. Cysteine 80 acts as the Nucleophile; for GATase activity in catalysis. Residues glutamine 84 and 130–131 (SL) contribute to the L-glutamine site. Catalysis depends on for GATase activity residues histidine 169 and glutamate 171.

In terms of assembly, heterotetramer consisting of two non-identical subunits: a beta subunit (TrpG) and a large alpha subunit (TrpE).

It carries out the reaction chorismate + L-glutamine = anthranilate + pyruvate + L-glutamate + H(+). Its pathway is amino-acid biosynthesis; L-tryptophan biosynthesis; L-tryptophan from chorismate: step 1/5. Its function is as follows. Part of a heterotetrameric complex that catalyzes the two-step biosynthesis of anthranilate, an intermediate in the biosynthesis of L-tryptophan. In the first step, the glutamine-binding beta subunit (TrpG) of anthranilate synthase (AS) provides the glutamine amidotransferase activity which generates ammonia as a substrate that, along with chorismate, is used in the second step, catalyzed by the large alpha subunit of AS (TrpE) to produce anthranilate. In the absence of TrpG, TrpE can synthesize anthranilate directly from chorismate and high concentrations of ammonia. Participates in the tryptophan-dependent indole-3-acetic acid production, which is a phytohormone released by A.brasilense. This Azospirillum brasilense protein is Anthranilate synthase component 2 (trpG).